A 440-amino-acid chain; its full sequence is MEYTPSPKPQLSSRANAFSIAALMSSGTPKDKETQESTIKPLEQFVEKSSCSQPLGDISIVDSHGEFTNSPSSLCTEPLIPTTPVIPSEEMAKISCSLETKELWDKFHDLGTEMIITKSGRRMFPTIRVSFSGVDADAKYIVLMDIVPVDNKRYRYAYHRSSWLVAGKADPPLPARLYVHPDSPFTGEQLLKQMVSFEKVKLTNNELDQHGHIILNSMHKYQPRVHIIKKKDHTASLLNLKSEEFRTFIFQETVFTAVTAYQNQLITKLKIDSNPFAKGFRDSSRLTDIERESVESLIQKHSYARSPIRTYGDEDVLGEDGQTMQSRGSAFTTSENLSLSSWVSSTSGFSGFQHPQSLTALGTSTASLATPIPHPIQGTLPPYSRLGMPITPSALASSMQGSGPTFPSFHMPRYHHYFQQGPYAAIQGLRHSSAVMTPFV.

Positions 103–282 (LWDKFHDLGT…SNPFAKGFRD (180 aa)) form a DNA-binding region, T-box.

It localises to the nucleus. In terms of biological role, transcriptional regulator that may be involved in heart developmental processes. This is T-box transcription factor TBX20 (tbx20) from Xenopus tropicalis (Western clawed frog).